Reading from the N-terminus, the 40-residue chain is Dolichyl-diphosphooligosaccharide--protein glycosyltransferase subunit 4 (40 aa).

Residues 1-4 lie on the Lumenal side of the membrane; that stretch reads MITD. The chain crosses the membrane as a helical span at residues 5 to 25; that stretch reads VQLAIFSNVLGVFLFLLVVAY. Over 26–40 the chain is Cytoplasmic; it reads HYINANTGKPSAKAK.

Belongs to the OST4 family. As to quaternary structure, component of the oligosaccharyltransferase (OST) complex.

The protein localises to the endoplasmic reticulum membrane. Subunit of the oligosaccharyl transferase (OST) complex that catalyzes the initial transfer of a defined glycan (Glc(3)Man(9)GlcNAc(2) in eukaryotes) from the lipid carrier dolichol-pyrophosphate to an asparagine residue within an Asn-X-Ser/Thr consensus motif in nascent polypeptide chains, the first step in protein N-glycosylation. N-glycosylation occurs cotranslationally and the complex associates with the Sec61 complex at the channel-forming translocon complex that mediates protein translocation across the endoplasmic reticulum (ER). All subunits are required for a maximal enzyme activity. This Drosophila erecta (Fruit fly) protein is Dolichyl-diphosphooligosaccharide--protein glycosyltransferase subunit 4.